A 253-amino-acid polypeptide reads, in one-letter code: Small ribosomal subunit protein uS3 (253 aa).

One can recognise a KH type-2 domain in the interval 38–106 (IRKYIHARLS…EVQINIFEIK (69 aa)). The segment at 216-253 (AGMDKKQAGQGGGKGGDSPRGDRKPFNKGGKPDARKRK) is disordered. A compositionally biased stretch (basic and acidic residues) spans 232 to 253 (DSPRGDRKPFNKGGKPDARKRK).

The protein belongs to the universal ribosomal protein uS3 family. In terms of assembly, part of the 30S ribosomal subunit. Forms a tight complex with proteins S10 and S14.

Functionally, binds the lower part of the 30S subunit head. Binds mRNA in the 70S ribosome, positioning it for translation. This is Small ribosomal subunit protein uS3 from Flavobacterium psychrophilum (strain ATCC 49511 / DSM 21280 / CIP 103535 / JIP02/86).